Here is a 395-residue protein sequence, read N- to C-terminus: Guanine nucleotide-binding protein subunit beta-5 (395 aa).

WD repeat units follow at residues 103 to 142 (GHGNKVLCMDWCKDKRRIVSSSQDGKVIVWDSFTTNKEHA), 145 to 184 (MPCTWVMACAYAPSGCAIACGGLDNKCSVYPLTFDKNENM), 193 to 234 (MHTN…QSFH), 236 to 278 (HGAD…QAFE), 279 to 318 (THESDINSVRYYPSGDAFASGSDDATCRLYDLRADREVAI), 320 to 362 (SKES…RVSI), and 365 to 394 (GHENRVSTLRVSPDGTAFCSGSWDHTLRVW).

It belongs to the WD repeat G protein beta family. Component of a complex composed of RGS9 (isoform RGS9-1), GNB5 and RGS9BP; within this complex, the presence of GNB5 stabilizes both itself and RGS9 and increases RGS9 GTPase-activating protein (GAP) activity. Interacts with RGS7, forming the RGS7-GNB5 complex; within this complex, the presence of GNB5 increases RGS7 GTPase-activating protein (GAP) activity. Interacts with GPR158; promotes the GTPase activator activity of the RGS7-GNB5 complex in absence of glycine, in contrast GTPase activator activity of the RGS7-GNB5 complex is inhibited in presence of glycine. Interacts with RGS6. As to expression, widely expressed.

It localises to the membrane. Enhances GTPase-activating protein (GAP) activity of regulator of G protein signaling (RGS) proteins, such as RGS7 and RGS9, hence involved in the termination of the signaling initiated by the G protein coupled receptors (GPCRs) by accelerating the GTP hydrolysis on the G-alpha subunits, thereby promoting their inactivation. Increases RGS7 GTPase-activating protein (GAP) activity, thereby regulating mood and cognition. Increases RGS9 GTPase-activating protein (GAP) activity, hence contributes to the deactivation of G protein signaling initiated by D(2) dopamine receptors. May play an important role in neuronal signaling, including in the parasympathetic, but not sympathetic, control of heart rate. The polypeptide is Guanine nucleotide-binding protein subunit beta-5 (GNB5) (Homo sapiens (Human)).